A 695-amino-acid polypeptide reads, in one-letter code: Segment polarity protein dishevelled homolog DVL-1 (695 aa).

The DIX domain occupies 1–85 (MAETKIIYHM…RVVSWLVLAE (85 aa)). A disordered region spans residues 89–236 (SDAGSQGTDS…RLRQTDRASS (148 aa)). Positions 142-151 (SHRRERARRR) are enriched in basic residues. Residues 152 to 171 (NRDEAARTNGHPRGDRRREL) are compositionally biased toward basic and acidic residues. Low complexity predominate over residues 177–192 (SASTVLSSELESSSFI). Position 194 is a phosphoserine (Ser-194). Over residues 201 to 214 (SRLSSSTEQSTSSR) the composition is skewed to low complexity. The segment covering 215 to 228 (LIRKHKCRRRKQRL) has biased composition (basic residues). Residues 251–323 (TVTLNMERHH…NDDAVRVLRE (73 aa)) form the PDZ domain. Residues 425–499 (PDSGLEIRDR…SEQCYYVFGD (75 aa)) enclose the DEP domain. The span at 551–580 (PAYQDPGFSYGSGSAGSQQSEGSKSSGSTR) shows a compositional bias: low complexity. Positions 551–641 (PAYQDPGFSY…SQASAVAPGL (91 aa)) are disordered. Over residues 622 to 635 (SQLSRGSSPRSQAS) the composition is skewed to polar residues.

This sequence belongs to the DSH family. As to quaternary structure, interacts with BRD7 and INVS. Interacts (via PDZ domain) with the VANGL1 and VANGL2 (via C-terminus). Interacts (via PDZ domain) with NXN. Interacts with CXXC4. Interacts with ARRB1; the interaction is enhanced by phosphorylation of DVL1. Interacts with CYLD. Interacts (via PDZ domain) with RYK. Self-associates (via DIX domain) and forms higher homooligomers. Interacts (via PDZ domain) with DACT1 and FZD7, where DACT1 and FZD7 compete for the same binding site. Interacts (via DEP domain) with MUSK; the interaction is direct and mediates the formation a DVL1, MUSK and PAK1 ternary complex involved in AChR clustering. Interacts (via PDZ domain) with TMEM88. Interacts with DCDC2. Interacts with FOXK2. Interacts with PKD1 (via extracellular domain). Interacts (via PDZ domain) with CCDC88C/DAPLE; competes with CCDC88C for binding to frizzled receptor FZD7 and dissociates from CCDC88C following initiation of non-canonical Wnt signaling when CCDC88C displaces DVL1 from ligand-activated FZD7. In terms of processing, ubiquitinated; undergoes both 'Lys-48'-linked ubiquitination, leading to its subsequent degradation by the ubiquitin-proteasome pathway, and 'Lys-63'-linked ubiquitination. The interaction with INVS is required for ubiquitination. Deubiquitinated by CYLD, which acts on 'Lys-63'-linked ubiquitin chains.

The protein localises to the cell membrane. Its subcellular location is the cytoplasm. It localises to the cytosol. It is found in the cytoplasmic vesicle. Its function is as follows. Participates in Wnt signaling by binding to the cytoplasmic C-terminus of frizzled family members and transducing the Wnt signal to down-stream effectors. Plays a role both in canonical and non-canonical Wnt signaling. Plays a role in the signal transduction pathways mediated by multiple Wnt genes. Required for LEF1 activation upon WNT1 and WNT3A signaling. DVL1 and PAK1 form a ternary complex with MUSK which is important for MUSK-dependent regulation of AChR clustering during the formation of the neuromuscular junction (NMJ). This is Segment polarity protein dishevelled homolog DVL-1 (Dvl1) from Rattus norvegicus (Rat).